Consider the following 663-residue polypeptide: Probable rhamnogalacturonate lyase B (663 aa).

Positions 1–19 (MRLRTSLGVASACASVASA) are cleaved as a signal peptide. N-linked (GlcNAc...) asparagine glycosylation is found at Asn-27, Asn-110, Asn-143, Asn-239, Asn-285, Asn-495, Asn-535, Asn-569, Asn-597, and Asn-638.

Belongs to the polysaccharide lyase 4 family.

The protein resides in the secreted. The enzyme catalyses Endotype eliminative cleavage of L-alpha-rhamnopyranosyl-(1-&gt;4)-alpha-D-galactopyranosyluronic acid bonds of rhamnogalacturonan I domains in ramified hairy regions of pectin leaving L-rhamnopyranose at the reducing end and 4-deoxy-4,5-unsaturated D-galactopyranosyluronic acid at the non-reducing end.. Its function is as follows. Pectinolytic enzymes consist of four classes of enzymes: pectin lyase, polygalacturonase, pectin methylesterase and rhamnogalacturonase. Degrades the rhamnogalacturonan I (RG-I) backbone of pectin. The protein is Probable rhamnogalacturonate lyase B (rglB) of Aspergillus flavus (strain ATCC 200026 / FGSC A1120 / IAM 13836 / NRRL 3357 / JCM 12722 / SRRC 167).